A 736-amino-acid polypeptide reads, in one-letter code: Catalase-peroxidase (736 aa).

Residues 1–30 form a disordered region; sequence MGGNVMTDDKMNSVTSGANKQETGRDMSNR. Polar residues predominate over residues 12–21; that stretch reads NSVTSGANKQ. Residues 101-224 constitute a cross-link (tryptophyl-tyrosyl-methioninium (Trp-Tyr) (with M-250)); sequence WHSAGTYRAG…LAAVQMGLIY (124 aa). Histidine 102 acts as the Proton acceptor in catalysis. Residues 224-250 constitute a cross-link (tryptophyl-tyrosyl-methioninium (Tyr-Met) (with W-101)); it reads YVNPEGPNGNPDPIAAAKDIREVFARM. Histidine 265 contributes to the heme b binding site. The tract at residues 351–373 is disordered; that stretch reads KGGAGAGTIPDAHDPSKRHAPSM.

Belongs to the peroxidase family. Peroxidase/catalase subfamily. In terms of assembly, homodimer or homotetramer. Heme b serves as cofactor. In terms of processing, formation of the three residue Trp-Tyr-Met cross-link is important for the catalase, but not the peroxidase activity of the enzyme.

It catalyses the reaction H2O2 + AH2 = A + 2 H2O. The catalysed reaction is 2 H2O2 = O2 + 2 H2O. Bifunctional enzyme with both catalase and broad-spectrum peroxidase activity. The chain is Catalase-peroxidase from Methanosarcina acetivorans (strain ATCC 35395 / DSM 2834 / JCM 12185 / C2A).